We begin with the raw amino-acid sequence, 648 residues long: SRSF protein kinase 1 (648 aa).

Residues 1–57 (MERKVLALQARKKRTKAKKDKAQRKPETQHRGSAPHSESDIPEQEEEILGSDDDEQE) form a disordered region. The segment covering 10 to 22 (ARKKRTKAKKDKA) has biased composition (basic residues). The span at 40–57 (DIPEQEEEILGSDDDEQE) shows a compositional bias: acidic residues. The residue at position 51 (S51) is a Phosphoserine. In terms of domain architecture, Protein kinase spans 80-646 (YHVIRKLGWG…AAECLRHPWL (567 aa)). ATP is bound by residues 86-94 (LGWGHFSTV) and K109. Catalysis depends on D213, which acts as the Proton acceptor. 2 disordered regions span residues 238–354 (WQRS…APEI) and 395–464 (PSFL…DSKG). The segment covering 265–276 (KNKKKKLKKKQK) has biased composition (basic residues). Basic and acidic residues-rich tracts occupy residues 277–288 (RQAELLEKRMQE) and 304–317 (NKQEESESPVDRPL). Phosphoserine occurs at positions 309, 311, and 333. 2 stretches are compositionally biased toward polar residues: residues 333–343 (SNSIGQDQTLT) and 396–441 (SFLN…TQLE). Phosphothreonine is present on T448. A Phosphoserine modification is found at S450. S548 carries the phosphoserine; by CK2 modification.

It belongs to the protein kinase superfamily. CMGC Ser/Thr protein kinase family. As to quaternary structure, monomer. Found in a multisubunit complex containing seven proteins, named toposome, which separates entangled circular chromatin DNA during chromosome segregation. Interacts with HHV-1 ICP27 protein. Interacts with DNAJC8 and AHSA1/AHA1 and this mediates formation of a complex with the Hsp70 /Hsp90 machinery. Binds to IGF2BP1, SYNCRIP, HNRNPA2B1 and HNRNPC. Interacts with SAFB/SAFB1 and SAFB2 which inhibits its activity. It depends on Mg(2+) as a cofactor. Predominantly expressed in the testis but is also present at lower levels in heart, spleen, liver, brain, kidney, lung and skeletal muscle. Present in all germinal cells in the seminiferous tubules but not in mature spermatozoa.

It localises to the cytoplasm. The protein localises to the nucleus. Its subcellular location is the nucleoplasm. It is found in the nucleus matrix. The protein resides in the microsome. It localises to the nucleus speckle. The protein localises to the chromosome. It carries out the reaction L-seryl-[protein] + ATP = O-phospho-L-seryl-[protein] + ADP + H(+). The enzyme catalyses L-threonyl-[protein] + ATP = O-phospho-L-threonyl-[protein] + ADP + H(+). Its activity is regulated as follows. Activated by phosphorylation on Ser-51 and Ser-548. Its function is as follows. Serine/arginine-rich protein-specific kinase which specifically phosphorylates its substrates at serine residues located in regions rich in arginine/serine dipeptides, known as RS domains and is involved in the phosphorylation of SR splicing factors and the regulation of splicing. Plays a central role in the regulatory network for splicing, controlling the intranuclear distribution of splicing factors in interphase cells and the reorganization of nuclear speckles during mitosis. Can influence additional steps of mRNA maturation, as well as other cellular activities, such as chromatin reorganization in somatic and sperm cells and cell cycle progression. Phosphorylates SFRS2, ZRSR2, LBR and PRM1. Phosphorylates SRSF1 using a directional (C-terminal to N-terminal) and a dual-track mechanism incorporating both processive phosphorylation (in which the kinase stays attached to the substrate after each round of phosphorylation) and distributive phosphorylation steps (in which the kinase and substrate dissociate after each phosphorylation event). The RS domain of SRSF1 binds first to a docking groove in the large lobe of the kinase domain of SRPK1. This induces certain structural changes in SRPK1 and/or RRM2 domain of SRSF1, allowing RRM2 to bind the kinase and initiate phosphorylation. The cycles continue for several phosphorylation steps in a processive manner (steps 1-8) until the last few phosphorylation steps (approximately steps 9-12). During that time, a mechanical stress induces the unfolding of the beta-4 motif in RRM2, which then docks at the docking groove of SRPK1. This also signals RRM2 to begin to dissociate, which facilitates SRSF1 dissociation after phosphorylation is completed. Can mediate hepatitis B virus (HBV) core protein phosphorylation. It plays a negative role in the regulation of HBV replication through a mechanism not involving the phosphorylation of the core protein but by reducing the packaging efficiency of the pregenomic RNA (pgRNA) without affecting the formation of the viral core particles. Can induce splicing of exon 10 in MAPT/TAU. The sequence is that of SRSF protein kinase 1 from Mus musculus (Mouse).